Consider the following 338-residue polypeptide: Fructose-1,6-bisphosphatase class 1 1 (338 aa).

Mg(2+)-binding residues include Glu-94, Asp-116, Leu-118, and Asp-119. Residues Asp-119 to Ser-122, Asn-210, and Lys-276 each bind substrate. Mg(2+) is bound at residue Glu-282.

Belongs to the FBPase class 1 family. In terms of assembly, homotetramer. It depends on Mg(2+) as a cofactor.

It is found in the cytoplasm. It catalyses the reaction beta-D-fructose 1,6-bisphosphate + H2O = beta-D-fructose 6-phosphate + phosphate. The protein operates within carbohydrate biosynthesis; gluconeogenesis. This is Fructose-1,6-bisphosphatase class 1 1 from Paraburkholderia xenovorans (strain LB400).